Consider the following 689-residue polypeptide: Elongation factor G (689 aa).

Residues 9–283 (AKFRNIGIMA…AIIEFMPSPL (275 aa)) form the tr-type G domain. Residues 18 to 25 (AHIDAGKT), 82 to 86 (DTPGH), and 136 to 139 (NKMD) contribute to the GTP site.

Belongs to the TRAFAC class translation factor GTPase superfamily. Classic translation factor GTPase family. EF-G/EF-2 subfamily.

The protein resides in the cytoplasm. In terms of biological role, catalyzes the GTP-dependent ribosomal translocation step during translation elongation. During this step, the ribosome changes from the pre-translocational (PRE) to the post-translocational (POST) state as the newly formed A-site-bound peptidyl-tRNA and P-site-bound deacylated tRNA move to the P and E sites, respectively. Catalyzes the coordinated movement of the two tRNA molecules, the mRNA and conformational changes in the ribosome. The chain is Elongation factor G from Clostridium botulinum (strain 657 / Type Ba4).